The primary structure comprises 175 residues: Beta-carotene hydroxylase (175 aa).

One can recognise a Fatty acid hydroxylase domain in the interval 11–136 (FVTVIGMEVI…RGKEGCVSFG (126 aa)).

Belongs to the sterol desaturase family.

It catalyses the reaction all-trans-beta-carotene + 4 reduced [2Fe-2S]-[ferredoxin] + 2 O2 + 4 H(+) = all-trans-zeaxanthin + 4 oxidized [2Fe-2S]-[ferredoxin] + 2 H2O. The protein operates within carotenoid biosynthesis; zeaxanthin biosynthesis. In terms of biological role, catalyzes the hydroxylation reaction from beta-carotene to zeaxanthin. The sequence is that of Beta-carotene hydroxylase (crtZ) from Pantoea ananas (Erwinia uredovora).